A 313-amino-acid chain; its full sequence is Probable F-box protein At3g44130 (313 aa).

One can recognise an F-box domain in the interval 1 to 46 (MASGNLPWELEEEILCRLPLGSLVRLRSVCKHWNDFFNDKWFIKKS).

This chain is Probable F-box protein At3g44130, found in Arabidopsis thaliana (Mouse-ear cress).